The chain runs to 151 residues: MVWLGIDLGDARVGLALSDPELTLAHPIGNIQVYGDSFRALDEVIDVIGDESVDHVVIGLPLLLNGEEGKSAKKARRWSVNLEKRLHAAVEDESYSVTRVPTIELVDERLTTVTAHHQLFDARIGGRKHRPMVDQQSAVVILQTALDRSRE.

Belongs to the YqgF nuclease family.

Its subcellular location is the cytoplasm. Could be a nuclease involved in processing of the 5'-end of pre-16S rRNA. The chain is Putative pre-16S rRNA nuclease from Bifidobacterium adolescentis (strain ATCC 15703 / DSM 20083 / NCTC 11814 / E194a).